The following is a 290-amino-acid chain: MKRILLFVLTNVMVVAVLGIVASLLGVNRFLTANGLNLTALLGFALVMGFGGAIISLLISKPMAKWTTKLHMIDNPQSPDEAWIVGTVRKFADKAGIGMPEVGIFEGEPNAFATGAFKNSSLVAVSTGLLQNMTREEVEAVIGHEVAHIANGDMVTMTLIQGVMNTFVVFLSRVIGYAVDSFLRRGDDRSSGPGIGYYVSTIVLDIVLGFAAAIVVAWFSRQREFRADAGSAALMGQKQPMMNALARLGGLPAGELPKAVEAMGITGSIGKLFATHPPIEERIAALQNAR.

The next 2 helical transmembrane spans lie at 4–24 (ILLF…VASL) and 39–59 (TALL…SLLI). Zn(2+) is bound at residue His144. Residue Glu145 is part of the active site. His148 contributes to the Zn(2+) binding site. Helical transmembrane passes span 159–179 (LIQG…GYAV) and 199–219 (VSTI…VAWF). Glu224 lines the Zn(2+) pocket.

The protein belongs to the peptidase M48B family. Zn(2+) serves as cofactor.

Its subcellular location is the cell inner membrane. This chain is Protease HtpX homolog, found in Variovorax paradoxus (strain S110).